The chain runs to 464 residues: Probable multidrug resistance protein NorM (464 aa).

Helical transmembrane passes span 22–42, 64–84, 104–124, 142–162, 172–192, 204–224, 258–278, 288–308, 326–346, 358–378, 384–404, and 410–430; these read LIKL…FGMA, VFWV…VTIA, FLAI…DVLI, LKVI…SAML, MIVT…MIFG, AAVA…YVIF, FVFS…GAEA, VESL…TLVG, GWIL…LFPE, IIEI…FLAI, GALR…ISIW, and VAFV…IGMI.

It belongs to the multi antimicrobial extrusion (MATE) (TC 2.A.66.1) family.

The protein localises to the cell membrane. Its function is as follows. Multidrug efflux pump. The sequence is that of Probable multidrug resistance protein NorM (norM) from Thermotoga maritima (strain ATCC 43589 / DSM 3109 / JCM 10099 / NBRC 100826 / MSB8).